A 119-amino-acid chain; its full sequence is Large ribosomal subunit protein bL20 (119 aa).

The protein belongs to the bacterial ribosomal protein bL20 family.

Binds directly to 23S ribosomal RNA and is necessary for the in vitro assembly process of the 50S ribosomal subunit. It is not involved in the protein synthesizing functions of that subunit. The sequence is that of Large ribosomal subunit protein bL20 from Streptococcus mutans serotype c (strain ATCC 700610 / UA159).